The sequence spans 61 residues: UPF0370 protein Spro_3503 (61 aa).

The helical transmembrane segment at 3 to 23 (WLADYWWIILLILVGMIISGI) threads the bilayer. The segment covering 38-48 (KPELPPHRDNN) has biased composition (basic and acidic residues). The tract at residues 38-61 (KPELPPHRDNNAEWDDDDDWPKKK) is disordered. The span at 49–61 (AEWDDDDDWPKKK) shows a compositional bias: acidic residues.

The protein belongs to the UPF0370 family.

It localises to the cell membrane. The sequence is that of UPF0370 protein Spro_3503 from Serratia proteamaculans (strain 568).